The chain runs to 427 residues: Glutamate-1-semialdehyde 2,1-aminomutase (427 aa).

At lysine 268 the chain carries N6-(pyridoxal phosphate)lysine.

Belongs to the class-III pyridoxal-phosphate-dependent aminotransferase family. HemL subfamily. Pyridoxal 5'-phosphate serves as cofactor.

It localises to the cytoplasm. The catalysed reaction is (S)-4-amino-5-oxopentanoate = 5-aminolevulinate. The protein operates within porphyrin-containing compound metabolism; protoporphyrin-IX biosynthesis; 5-aminolevulinate from L-glutamyl-tRNA(Glu): step 2/2. This Methanococcus maripaludis (strain C5 / ATCC BAA-1333) protein is Glutamate-1-semialdehyde 2,1-aminomutase.